We begin with the raw amino-acid sequence, 419 residues long: Octopressin receptor (419 aa).

Topologically, residues 1-37 (MENFTEENLHPWITTTTRVYNNVTIFPQYDDELGKFE) are extracellular. Residues asparagine 3 and asparagine 22 are each glycosylated (N-linked (GlcNAc...) asparagine). Residues 38-58 (IMVLCILCFMALFGNAVVLIV) traverse the membrane as a helical segment. At 59 to 80 (LRIKKTTLTRMQLLIVYLSVTD) the chain is on the cytoplasmic side. Residues 81–101 (ISVALFHILPTIILKINVYFL) traverse the membrane as a helical segment. Residues 102 to 108 (GDISACR) lie on the Extracellular side of the membrane. The cysteines at positions 107 and 182 are disulfide-linked. A helical transmembrane segment spans residues 109-129 (VYQFITVAELYASSFVLIVTA). The Cytoplasmic segment spans residues 130 to 153 (LDRYISICHPLAAHMWTNRRVHMT). Residues 154 to 174 (TALALFLALMCSLPQLDAVLV) traverse the membrane as a helical segment. Topologically, residues 175 to 192 (DFHGGKLCRPNLTTELAN) are extracellular. Residue asparagine 185 is glycosylated (N-linked (GlcNAc...) asparagine). The helical transmembrane segment at 193-213 (IAYSWWAFCSVFFVPLLLLIF) threads the bilayer. Over 214–292 (FYGRICFVVW…VSKSKIKTIK (79 aa)) the chain is Cytoplasmic. The segment at 253–274 (SQTSSENRVKNYSDARDKDSSR) is disordered. Positions 259 to 274 (NRVKNYSDARDKDSSR) are enriched in basic and acidic residues. A helical transmembrane segment spans residues 293–313 (LTFSVVACFIICYTPFFTVLM). Over 314–329 (ARTYDAELSSAQTPAL) the chain is Extracellular. A helical membrane pass occupies residues 330–350 (VILSLLPSLNSCTNPWIYLAF). Topologically, residues 351 to 419 (SGKVWCRQQS…TTALMSSSPC (69 aa)) are cytoplasmic.

Belongs to the G-protein coupled receptor 1 family. Vasopressin/oxytocin receptor subfamily. In terms of tissue distribution, present in the nervous system and peripheral tissues.

It localises to the cell membrane. In terms of biological role, acts as a receptor for octopressin. The chain is Octopressin receptor from Octopus vulgaris (Common octopus).